The following is a 248-amino-acid chain: N-acylneuraminate-9-phosphatase (248 aa).

Residue Asp-12 participates in Mg(2+) binding. Positions 13, 14, 131, 132, and 164 each coordinate phosphate. Asp-14 is a binding site for Mg(2+). Asp-189 provides a ligand contact to Mg(2+).

The protein belongs to the HAD-like hydrolase superfamily. NANP family. Mg(2+) serves as cofactor.

It carries out the reaction N-acetylneuraminate 9-phosphate + H2O = N-acetylneuraminate + phosphate. The catalysed reaction is N-glycoloylneuraminate 9-phosphate + H2O = N-glycoloylneuraminate + phosphate. It participates in amino-sugar metabolism; N-acetylneuraminate biosynthesis. Inhibited by calcium. Inhibited by vanadate, sodium orthovanadate and phosphonate. Its function is as follows. Catalyzes the dephosphorylation of N-acylneuraminate 9-phosphate (Neu5Ac-9-P) to N-acetylneuraminic acid (Neu5Ac or sialic acid). Can also use N-glycoloylneuraminate 9-phosphate as substrate. The sequence is that of N-acylneuraminate-9-phosphatase from Rattus norvegicus (Rat).